Here is a 330-residue protein sequence, read N- to C-terminus: Thioredoxin domain-containing protein 6 (330 aa).

The Thioredoxin domain maps to 11–115; that stretch reads QVNISTQELW…QKTILDQLEA (105 aa). Positions 157 to 303 are NDK; sequence ERTCTLAIIK…LFPSLKFSDK (147 aa). Residues 300 to 330 are disordered; that stretch reads FSDKDTEAPQGGEAEATAGPTEALCFPEDVD. The span at 307–322 shows a compositional bias: low complexity; that stretch reads APQGGEAEATAGPTEA.

Belongs to the NDK family. As to quaternary structure, monomer and homodimer. Detected at very low levels in testis, lung and brain.

The protein localises to the cytoplasm. It is found in the cytoskeleton. Its subcellular location is the cilium axoneme. The protein resides in the dynein axonemal particle. Its function is as follows. May be a regulator of microtubule physiology. This chain is Thioredoxin domain-containing protein 6, found in Homo sapiens (Human).